The primary structure comprises 180 residues: ATP synthase subunit delta (180 aa).

The protein belongs to the ATPase delta chain family. F-type ATPases have 2 components, F(1) - the catalytic core - and F(0) - the membrane proton channel. F(1) has five subunits: alpha(3), beta(3), gamma(1), delta(1), epsilon(1). F(0) has three main subunits: a(1), b(2) and c(10-14). The alpha and beta chains form an alternating ring which encloses part of the gamma chain. F(1) is attached to F(0) by a central stalk formed by the gamma and epsilon chains, while a peripheral stalk is formed by the delta and b chains.

The protein resides in the cell membrane. Its function is as follows. F(1)F(0) ATP synthase produces ATP from ADP in the presence of a proton or sodium gradient. F-type ATPases consist of two structural domains, F(1) containing the extramembraneous catalytic core and F(0) containing the membrane proton channel, linked together by a central stalk and a peripheral stalk. During catalysis, ATP synthesis in the catalytic domain of F(1) is coupled via a rotary mechanism of the central stalk subunits to proton translocation. Functionally, this protein is part of the stalk that links CF(0) to CF(1). It either transmits conformational changes from CF(0) to CF(1) or is implicated in proton conduction. The protein is ATP synthase subunit delta of Alkaliphilus oremlandii (strain OhILAs) (Clostridium oremlandii (strain OhILAs)).